The chain runs to 716 residues: Polyribonucleotide nucleotidyltransferase (716 aa).

Residues D488 and D494 each contribute to the Mg(2+) site. A KH domain is found at 555–614 (PKIETITIPTDKIREVIGTGGKVIREIVATTGAKVDINDEGTVKVSASDGAKIKAAIDWI). The region spanning 624–692 (GAIYDGKVVK…DRGKTKLSMK (69 aa)) is the S1 motif domain. Positions 695–716 (DQETGEDLSKKEAVSPEEAVNT) are disordered.

Belongs to the polyribonucleotide nucleotidyltransferase family. Mg(2+) serves as cofactor.

It localises to the cytoplasm. The enzyme catalyses RNA(n+1) + phosphate = RNA(n) + a ribonucleoside 5'-diphosphate. Its function is as follows. Involved in mRNA degradation. Catalyzes the phosphorolysis of single-stranded polyribonucleotides processively in the 3'- to 5'-direction. The protein is Polyribonucleotide nucleotidyltransferase of Caulobacter sp. (strain K31).